The following is a 222-amino-acid chain: Pectate lyase A (222 aa).

An N-terminal signal peptide occupies residues 1–26 (MKKMLTLLLSAGLVASIFGVMPAAAA).

Belongs to the polysaccharide lyase 3 family. Ca(2+) is required as a cofactor.

The protein localises to the secreted. It carries out the reaction Eliminative cleavage of (1-&gt;4)-alpha-D-galacturonan to give oligosaccharides with 4-deoxy-alpha-D-galact-4-enuronosyl groups at their non-reducing ends.. The enzyme catalyses Eliminative cleavage of (1-&gt;4)-alpha-D-galacturonan methyl ester to give oligosaccharides with 4-deoxy-6-O-methyl-alpha-D-galact-4-enuronosyl groups at their non-reducing ends.. It functions in the pathway glycan metabolism; pectin degradation. Functionally, catalyzes the depolymerization of both polygalacturonate and pectins with low (20-34%) and high (90%) levels of methyl esterification, with an endo mode of action. In contrast to the majority of pectate lyases, displays high activity on highly methylated pectins. Does not show xylanase and cellulase activity. The protein is Pectate lyase A of Paenibacillus amylolyticus.